A 144-amino-acid polypeptide reads, in one-letter code: Transcription antitermination protein NusB (144 aa).

The protein belongs to the NusB family.

In terms of biological role, involved in transcription antitermination. Required for transcription of ribosomal RNA (rRNA) genes. Binds specifically to the boxA antiterminator sequence of the ribosomal RNA (rrn) operons. The sequence is that of Transcription antitermination protein NusB from Dictyoglomus turgidum (strain DSM 6724 / Z-1310).